Consider the following 459-residue polypeptide: tRNA modification GTPase MnmE (459 aa).

3 residues coordinate (6S)-5-formyl-5,6,7,8-tetrahydrofolate: Arg-22, Glu-85, and Arg-124. The TrmE-type G domain occupies 221–380; sequence GLSTVIVGKP…LELQIRDLFF (160 aa). Asn-231 lines the K(+) pocket. Residues 231-236, 250-256, and 275-278 each bind GTP; these read NVGKSS, TEVAGTT, and DTAG. Ser-235 contributes to the Mg(2+) binding site. 3 residues coordinate K(+): Thr-250, Val-252, and Thr-255. Thr-256 lines the Mg(2+) pocket. Lys-459 contributes to the (6S)-5-formyl-5,6,7,8-tetrahydrofolate binding site.

It belongs to the TRAFAC class TrmE-Era-EngA-EngB-Septin-like GTPase superfamily. TrmE GTPase family. As to quaternary structure, homodimer. Heterotetramer of two MnmE and two MnmG subunits. Requires K(+) as cofactor.

The protein localises to the cytoplasm. In terms of biological role, exhibits a very high intrinsic GTPase hydrolysis rate. Involved in the addition of a carboxymethylaminomethyl (cmnm) group at the wobble position (U34) of certain tRNAs, forming tRNA-cmnm(5)s(2)U34. The protein is tRNA modification GTPase MnmE of Staphylococcus haemolyticus (strain JCSC1435).